We begin with the raw amino-acid sequence, 66 residues long: Large ribosomal subunit protein uL29 (66 aa).

It belongs to the universal ribosomal protein uL29 family.

This is Large ribosomal subunit protein uL29 from Chelativorans sp. (strain BNC1).